The sequence spans 114 residues: DNA-directed RNA polymerases II, IV and V subunit 9A (114 aa).

Residues C7, C10, C29, C32, C76, C79, C103, and C108 each contribute to the Zn(2+) site. The TFIIS-type zinc finger occupies 72–113; the sequence is KAVRCSKCQHREAVFFQATARGEEGMTLFFVCCNPNCGHRWR.

It belongs to the archaeal RpoM/eukaryotic RPA12/RPB9/RPC11 RNA polymerase family. In terms of assembly, component of the RNA polymerase II, IV and V complexes. Interacts with NRPD1.

The protein resides in the nucleus. It is found in the nucleolus. In terms of biological role, DNA-dependent RNA polymerase catalyzes the transcription of DNA into RNA using the four ribonucleoside triphosphates as substrates. Component of RNA polymerase II which synthesizes mRNA precursors and many functional non-coding RNAs. Pol II is the central component of the basal RNA polymerase II transcription machinery. It is composed of mobile elements that move relative to each other. Component of RNA polymerases IV and V which mediate short-interfering RNAs (siRNA) accumulation and subsequent RNA-directed DNA methylation-dependent (RdDM) transcriptional gene silencing (TGS) of endogenous repeated sequences, including transposable elements. Required for RNA silencing. This chain is DNA-directed RNA polymerases II, IV and V subunit 9A (NRPB9A), found in Arabidopsis thaliana (Mouse-ear cress).